Consider the following 116-residue polypeptide: Flagellar transcriptional regulator FlhD (116 aa).

The protein belongs to the FlhD family. In terms of assembly, homodimer; disulfide-linked. Forms a heterohexamer composed of two FlhC and four FlhD subunits. Each FlhC binds a FlhD dimer, forming a heterotrimer, and a hexamer assembles by dimerization of two heterotrimers.

It is found in the cytoplasm. Functionally, functions in complex with FlhC as a master transcriptional regulator that regulates transcription of several flagellar and non-flagellar operons by binding to their promoter region. Activates expression of class 2 flagellar genes, including fliA, which is a flagellum-specific sigma factor that turns on the class 3 genes. Also regulates genes whose products function in a variety of physiological pathways. This chain is Flagellar transcriptional regulator FlhD, found in Escherichia coli O157:H7.